The sequence spans 493 residues: Adenylyltransferase and sulfurtransferase uba4 (493 aa).

ATP-binding positions include G99, D120, 127–131 (SNLHR), K144, and 188–189 (DN). C237 and C240 together coordinate Zn(2+). C254 serves as the catalytic Glycyl thioester intermediate; for adenylyltransferase activity. Positions 316 and 319 each coordinate Zn(2+). In terms of domain architecture, Rhodanese spans 376–491 (INKEPTIIDV…WREQIDPDWP (116 aa)). Residue C446 is the Cysteine persulfide intermediate; for sulfurtransferase activity of the active site.

It in the N-terminal section; belongs to the HesA/MoeB/ThiF family. UBA4 subfamily. It depends on Zn(2+) as a cofactor.

The protein resides in the cytoplasm. It localises to the cytosol. It catalyses the reaction [molybdopterin-synthase sulfur-carrier protein]-C-terminal Gly-Gly + ATP + H(+) = [molybdopterin-synthase sulfur-carrier protein]-C-terminal Gly-Gly-AMP + diphosphate. It carries out the reaction [molybdopterin-synthase sulfur-carrier protein]-C-terminal Gly-Gly-AMP + S-sulfanyl-L-cysteinyl-[cysteine desulfurase] + AH2 = [molybdopterin-synthase sulfur-carrier protein]-C-terminal-Gly-aminoethanethioate + L-cysteinyl-[cysteine desulfurase] + A + AMP + 2 H(+). Its pathway is tRNA modification; 5-methoxycarbonylmethyl-2-thiouridine-tRNA biosynthesis. It participates in cofactor biosynthesis; molybdopterin biosynthesis. Plays a central role in 2-thiolation of mcm(5)S(2)U at tRNA wobble positions of cytosolic tRNA(Lys), tRNA(Glu) and tRNA(Gln). Also essential during biosynthesis of the molybdenum cofactor. Acts by mediating the C-terminal thiocarboxylation of sulfur carriers urm1 and mocs2a. Its N-terminus first activates urm1 and mocs2a as acyl-adenylates (-COAMP), then the persulfide sulfur on the catalytic cysteine is transferred to urm1 and mocs2a to form thiocarboxylation (-COSH) of their C-terminus. The reaction probably involves hydrogen sulfide that is generated from the persulfide intermediate and that acts as a nucleophile towards urm1 and mocs2a. Subsequently, a transient disulfide bond is formed. Does not use thiosulfate as sulfur donor; nfs1 probably acting as a sulfur donor for thiocarboxylation reactions. This chain is Adenylyltransferase and sulfurtransferase uba4, found in Aspergillus fumigatus (strain ATCC MYA-4609 / CBS 101355 / FGSC A1100 / Af293) (Neosartorya fumigata).